Consider the following 855-residue polypeptide: Pentatricopeptide repeat-containing protein At1g74750 (855 aa).

The segment at 21–40 (GSRPSAADGNSCTCAEDESG) is disordered. PPR repeat units follow at residues 358–392 (DGHT…GCKP), 393–427 (NTVT…GCEP), 428–462 (DRVT…GLSP), 463–497 (DTFT…GCTP), 498–532 (NLVT…GFQP), 533–567 (DKVT…NWVP), 568–602 (DEPV…GLRP), and 603–637 (NVPT…GLHP). The Smr domain occupies 755–838 (INLHVMSEGT…NSGCFVGSGE (84 aa)).

The protein belongs to the PPR family. P subfamily.

This is Pentatricopeptide repeat-containing protein At1g74750 from Arabidopsis thaliana (Mouse-ear cress).